A 263-amino-acid chain; its full sequence is Small ribosomal subunit protein uS2 (263 aa).

Serine 2 is subject to N-acetylserine. Residues glutamate 211–glutamate 242 are compositionally biased toward acidic residues. The segment at glutamate 211–phenylalanine 263 is disordered. Low complexity predominate over residues asparagine 246 to phenylalanine 263.

Belongs to the universal ribosomal protein uS2 family. Component of the small ribosomal subunit. Mature ribosomes consist of a small (40S) and a large (60S) subunit. The 40S subunit contains about 33 different proteins and 1 molecule of RNA (18S). The 60S subunit contains about 49 different proteins and 3 molecules of RNA (25S, 5.8S and 5S). Interacts with RPS21.

It localises to the cytoplasm. Required for the assembly and/or stability of the 40S ribosomal subunit. Required for the processing of the 20S rRNA-precursor to mature 18S rRNA in a late step of the maturation of 40S ribosomal subunits. The sequence is that of Small ribosomal subunit protein uS2 from Komagataella phaffii (strain GS115 / ATCC 20864) (Yeast).